Here is a 239-residue protein sequence, read N- to C-terminus: RNA polymerase sigma-E factor (239 aa).

Positions M1–I29 are cleaved as a propeptide — removed by SpoIIGA. Residues D86 to V99 carry the Polymerase core binding motif. A DNA-binding region (H-T-H motif) is located at residues Q206–K225.

It belongs to the sigma-70 factor family. Proteolytically cleaved in the N-terminus by SpoIIGA to yield the active peptide.

In terms of biological role, sigma factors are initiation factors that promote the attachment of RNA polymerase to specific initiation sites and are then released. This sigma factor is responsible for the expression of sporulation specific genes. The sequence is that of RNA polymerase sigma-E factor (sigE) from Bacillus subtilis (strain 168).